The sequence spans 433 residues: MRMVDIIIKKQNGKELTTEEIQFFVNGYTDGSIPDYQASALAMAIFFQDMSDRERADLTMAMVNSGETIDLSAIEGIKVDKHSTGGVGDTTTLVLAPLVAALDVPVAKMSGRGLGHTGGTIDKLEAIMGFHVELTKDEFIKLVNRDKVAVIGQSGNLTPADKKLYALRDVTGTVNSIPLIASSIMSKKIAAGADAIVLDVKTGAGAFMKTEEDAAELAKAMVRIGNNVGRQTMAVISDMSQPLGFAIGNALEVKEAIDTLKGEGPEDLHELVLTLGSQMVVLAKKADTLDEARAKLEEVMKNGKALEKFKDFLKNQGGDSSIVDDPSKLPQAAYQIDVPAKEAGVVSEIVADEIGVAAMLLGAGRATKEDEIDLAVGIMLRKKVGDKVEKGEPLVTLYANRENVDEVIAKVYDNIRIAAEAKAPKLIHTLITE.

81–83 (KHS) serves as a coordination point for phosphate. K(+)-binding residues include Gly-88 and Thr-90. Phosphate contacts are provided by residues Thr-92, 108–110 (KMS), and Thr-120. Substrate is bound by residues Arg-168 and Lys-187. Residues Leu-243, Ala-246, and Glu-255 each coordinate K(+).

Belongs to the thymidine/pyrimidine-nucleoside phosphorylase family. Homodimer. It depends on K(+) as a cofactor.

The enzyme catalyses uridine + phosphate = alpha-D-ribose 1-phosphate + uracil. It carries out the reaction thymidine + phosphate = 2-deoxy-alpha-D-ribose 1-phosphate + thymine. It catalyses the reaction 2'-deoxyuridine + phosphate = 2-deoxy-alpha-D-ribose 1-phosphate + uracil. In terms of biological role, catalyzes phosphorolysis of the pyrimidine nucleosides uridine, thymidine and 2'-deoxyuridine with the formation of the corresponding pyrimidine base and ribose-1-phosphate. This Bacillus subtilis (strain 168) protein is Pyrimidine-nucleoside phosphorylase.